The following is a 134-amino-acid chain: ATP synthase epsilon chain, plastid (134 aa).

Belongs to the ATPase epsilon chain family. In terms of assembly, F-type ATPases have 2 components, CF(1) - the catalytic core - and CF(0) - the membrane proton channel. CF(1) has five subunits: alpha(3), beta(3), gamma(1), delta(1), epsilon(1). CF(0) has three main subunits: a, b and c.

Its subcellular location is the plastid membrane. Functionally, produces ATP from ADP in the presence of a proton gradient across the membrane. The polypeptide is ATP synthase epsilon chain, plastid (Prototheca wickerhamii).